The following is a 245-amino-acid chain: Histone deacetylase HDT1 (245 aa).

Position 1 is an N-acetylmethionine (Met1). 2 required to repress transcription regions span residues Glu2–Gly5 and Gly101–Glu162. Positions Pro99–Lys245 are disordered. A compositionally biased stretch (acidic residues) spans Ser103–Val113. Residues Pro114–Lys124 show a composition bias toward low complexity. A compositionally biased stretch (acidic residues) spans Asp137–Glu162. Positions Thr178–Pro195 are enriched in low complexity. Polar residues predominate over residues Ala208 to Glu234. A Phosphoserine modification is found at Ser211. The C2H2-type zinc finger occupies Val218–His241.

This sequence belongs to the histone deacetylase HD2 family. As to quaternary structure, interacts with DNMT2. Interacts with DEK3. As to expression, expressed in leaves, roots, stems, young plantlets, flowers and siliques. Highest levels in ovules, embryos, shoot apical meristems and first leaves. Also expressed in somatic embryos.

The protein resides in the nucleus. The protein localises to the nucleolus. Probably mediates the deacetylation of lysine residues on the N-terminal part of the core histones (H2A, H2B, H3 and H4). Histone deacetylation gives a tag for epigenetic repression and plays an important role in transcriptional regulation, cell cycle progression and developmental events. Required for histone H3 'Lys-9' deacetylation. Involved in rRNA gene silencing in nucleolar dominance. Seems to be implicated in the regulation of genes involved in seeds development. This is Histone deacetylase HDT1 from Arabidopsis thaliana (Mouse-ear cress).